The chain runs to 379 residues: Lipoyl synthase, mitochondrial (379 aa).

Positions 94, 99, 105, 126, 130, 133, and 342 each coordinate [4Fe-4S] cluster. The 223-residue stretch at 109 to 331 (GEDNGAATAT…EKEAMSMGFL (223 aa)) folds into the Radical SAM core domain.

This sequence belongs to the radical SAM superfamily. Lipoyl synthase family. [4Fe-4S] cluster serves as cofactor.

Its subcellular location is the mitochondrion. It catalyses the reaction [[Fe-S] cluster scaffold protein carrying a second [4Fe-4S](2+) cluster] + N(6)-octanoyl-L-lysyl-[protein] + 2 oxidized [2Fe-2S]-[ferredoxin] + 2 S-adenosyl-L-methionine + 4 H(+) = [[Fe-S] cluster scaffold protein] + N(6)-[(R)-dihydrolipoyl]-L-lysyl-[protein] + 4 Fe(3+) + 2 hydrogen sulfide + 2 5'-deoxyadenosine + 2 L-methionine + 2 reduced [2Fe-2S]-[ferredoxin]. It functions in the pathway protein modification; protein lipoylation via endogenous pathway; protein N(6)-(lipoyl)lysine from octanoyl-[acyl-carrier-protein]: step 2/2. In terms of biological role, catalyzes the radical-mediated insertion of two sulfur atoms into the C-6 and C-8 positions of the octanoyl moiety bound to the lipoyl domains of lipoate-dependent enzymes, thereby converting the octanoylated domains into lipoylated derivatives. The sequence is that of Lipoyl synthase, mitochondrial from Leishmania braziliensis.